The primary structure comprises 100 residues: Urease subunit gamma (100 aa).

Belongs to the urease gamma subunit family. In terms of assembly, heterotrimer of UreA (gamma), UreB (beta) and UreC (alpha) subunits. Three heterotrimers associate to form the active enzyme.

It is found in the cytoplasm. It carries out the reaction urea + 2 H2O + H(+) = hydrogencarbonate + 2 NH4(+). The protein operates within nitrogen metabolism; urea degradation; CO(2) and NH(3) from urea (urease route): step 1/1. This Edwardsiella ictaluri (strain 93-146) protein is Urease subunit gamma.